We begin with the raw amino-acid sequence, 785 residues long: Phosphoinositide phosphatase SAC5 (785 aa).

Residues 158 to 533 form the SAC domain; that stretch reads LSVVDLSKNF…GNTLAMQYGG (376 aa). The Phosphatase catalytic core signature appears at 469 to 480; sequence RTNCIDCLDRTN. Polar residues predominate over residues 688 to 700; sequence GSGQMFQGSSSNS. Positions 688-707 are disordered; it reads GSGQMFQGSSSNSDSHRPND.

Component of the PI(3,5)P2 regulatory complex at least composed of ATG18, SAC/FIG4, FAB1 and VAC14. Mg(2+) serves as cofactor. In terms of tissue distribution, ubiquitous with a higher level of expression in young seedlings than in other tissues.

The protein localises to the vacuole membrane. The enzyme catalyses a 1,2-diacyl-sn-glycero-3-phospho-(1D-myo-inositol-3,5-bisphosphate) + H2O = a 1,2-diacyl-sn-glycero-3-phospho-(1D-myo-inositol-3-phosphate) + phosphate. Its function is as follows. The PI(3,5)P2 regulatory complex regulates both the synthesis and turnover of phosphatidylinositol 3,5-bisphosphate (PtdIns(3,5)P2). This is Phosphoinositide phosphatase SAC5 (SAC5) from Arabidopsis thaliana (Mouse-ear cress).